We begin with the raw amino-acid sequence, 319 residues long: Ribose-phosphate pyrophosphokinase (319 aa).

Residues 41–43 (DGE) and 100–101 (RQ) contribute to the ATP site. Mg(2+) is bound by residues His-134 and Asp-176. Lys-199 is an active-site residue. D-ribose 5-phosphate-binding positions include Arg-201, Asp-225, and 229–233 (DTAGT).

The protein belongs to the ribose-phosphate pyrophosphokinase family. Class I subfamily. Homohexamer. Mg(2+) serves as cofactor.

It localises to the cytoplasm. It catalyses the reaction D-ribose 5-phosphate + ATP = 5-phospho-alpha-D-ribose 1-diphosphate + AMP + H(+). The protein operates within metabolic intermediate biosynthesis; 5-phospho-alpha-D-ribose 1-diphosphate biosynthesis; 5-phospho-alpha-D-ribose 1-diphosphate from D-ribose 5-phosphate (route I): step 1/1. In terms of biological role, involved in the biosynthesis of the central metabolite phospho-alpha-D-ribosyl-1-pyrophosphate (PRPP) via the transfer of pyrophosphoryl group from ATP to 1-hydroxyl of ribose-5-phosphate (Rib-5-P). The polypeptide is Ribose-phosphate pyrophosphokinase (Clostridium perfringens (strain 13 / Type A)).